A 128-amino-acid polypeptide reads, in one-letter code: Regulator of ribonuclease activity B (128 aa).

The protein belongs to the RraB family. In terms of assembly, interacts with the C-terminal region of Rne.

It is found in the cytoplasm. Globally modulates RNA abundance by binding to RNase E (Rne) and regulating its endonucleolytic activity. Can modulate Rne action in a substrate-dependent manner by altering the composition of the degradosome. This chain is Regulator of ribonuclease activity B, found in Idiomarina loihiensis (strain ATCC BAA-735 / DSM 15497 / L2-TR).